The primary structure comprises 183 residues: Ribosome maturation factor RimM (183 aa).

The PRC barrel domain occupies 96-171 (PDEFYDHELE…VALIDPPEGL (76 aa)).

This sequence belongs to the RimM family. As to quaternary structure, binds ribosomal protein uS19.

It localises to the cytoplasm. Functionally, an accessory protein needed during the final step in the assembly of 30S ribosomal subunit, possibly for assembly of the head region. Essential for efficient processing of 16S rRNA. May be needed both before and after RbfA during the maturation of 16S rRNA. It has affinity for free ribosomal 30S subunits but not for 70S ribosomes. The chain is Ribosome maturation factor RimM from Rhodococcus jostii (strain RHA1).